A 506-amino-acid polypeptide reads, in one-letter code: Cytochrome P450 52B1 (506 aa).

Cysteine 451 provides a ligand contact to heme.

The protein belongs to the cytochrome P450 family. The cofactor is heme.

In terms of biological role, together with an NADPH cytochrome P450 the enzyme system catalyzes the terminal hydroxylation as the first step in the assimilation of alkanes and fatty acids. In Candida tropicalis (Yeast), this protein is Cytochrome P450 52B1 (CYP52B1).